The sequence spans 131 residues: D-ribose pyranase (131 aa).

Residue His20 is the Proton donor of the active site. Residues Asp28, His98, and 120-122 contribute to the substrate site; that span reads YAN.

Belongs to the RbsD / FucU family. RbsD subfamily. As to quaternary structure, homodecamer.

It localises to the cytoplasm. It catalyses the reaction beta-D-ribopyranose = beta-D-ribofuranose. It participates in carbohydrate metabolism; D-ribose degradation; D-ribose 5-phosphate from beta-D-ribopyranose: step 1/2. Its function is as follows. Catalyzes the interconversion of beta-pyran and beta-furan forms of D-ribose. This chain is D-ribose pyranase, found in Clostridium perfringens (strain 13 / Type A).